The primary structure comprises 513 residues: ATP synthase subunit alpha (513 aa).

Residue 169 to 176 (GDRQTGKT) coordinates ATP.

This sequence belongs to the ATPase alpha/beta chains family. In terms of assembly, F-type ATPases have 2 components, CF(1) - the catalytic core - and CF(0) - the membrane proton channel. CF(1) has five subunits: alpha(3), beta(3), gamma(1), delta(1), epsilon(1). CF(0) has three main subunits: a(1), b(2) and c(9-12). The alpha and beta chains form an alternating ring which encloses part of the gamma chain. CF(1) is attached to CF(0) by a central stalk formed by the gamma and epsilon chains, while a peripheral stalk is formed by the delta and b chains.

It localises to the cell inner membrane. The catalysed reaction is ATP + H2O + 4 H(+)(in) = ADP + phosphate + 5 H(+)(out). In terms of biological role, produces ATP from ADP in the presence of a proton gradient across the membrane. The alpha chain is a regulatory subunit. This is ATP synthase subunit alpha from Vibrio vulnificus (strain CMCP6).